Reading from the N-terminus, the 256-residue chain is MTERRQPSLSTDTLPTREAAAIELLSQVCRELDSIVFATSLGAEDMVLTEIIRRERLPIRIFTLDTGRLPTETLELIEVVERHYGTRIERYAPHPDAIADYVSRYGLDGFYDSVPARQACCRVRKLEPLKRALAGQSAWVTGLRAEQSVTRAELPAREWDAANGLEKINPLADWSEHEVWAFIRHHRVPYNPLHNQGYPSIGCAPCTRAITVGEDVRAGRWWWENPETKECGLHRREFAPRQPSAHPAIERDRSAA.

The [4Fe-4S] cluster site is built by Cys120, Cys121, Cys203, and Cys206. Cys231 functions as the Nucleophile; cysteine thiosulfonate intermediate in the catalytic mechanism.

Belongs to the PAPS reductase family. CysH subfamily. The cofactor is [4Fe-4S] cluster.

Its subcellular location is the cytoplasm. The enzyme catalyses [thioredoxin]-disulfide + sulfite + AMP + 2 H(+) = adenosine 5'-phosphosulfate + [thioredoxin]-dithiol. It functions in the pathway sulfur metabolism; hydrogen sulfide biosynthesis; sulfite from sulfate. Functionally, catalyzes the formation of sulfite from adenosine 5'-phosphosulfate (APS) using thioredoxin as an electron donor. The sequence is that of Adenosine 5'-phosphosulfate reductase from Allochromatium vinosum (strain ATCC 17899 / DSM 180 / NBRC 103801 / NCIMB 10441 / D) (Chromatium vinosum).